A 367-amino-acid polypeptide reads, in one-letter code: Peptide chain release factor 2 (367 aa).

Gln-254 bears the N5-methylglutamine mark.

This sequence belongs to the prokaryotic/mitochondrial release factor family. Post-translationally, methylated by PrmC. Methylation increases the termination efficiency of RF2.

Its subcellular location is the cytoplasm. Functionally, peptide chain release factor 2 directs the termination of translation in response to the peptide chain termination codons UGA and UAA. This Bordetella bronchiseptica (strain ATCC BAA-588 / NCTC 13252 / RB50) (Alcaligenes bronchisepticus) protein is Peptide chain release factor 2.